Reading from the N-terminus, the 776-residue chain is Bifunctional lysine-specific demethylase and histidyl-hydroxylase NO66 (776 aa).

Disordered stretches follow at residues Met-1–Phe-57, Glu-87–His-126, and Ile-165–Gly-288. 2 stretches are compositionally biased toward basic and acidic residues: residues His-47 to Phe-57 and Glu-98 to Ala-119. A compositionally biased stretch (acidic residues) spans Leu-166–Met-204. The segment covering Val-206–Glu-216 has biased composition (basic and acidic residues). The span at Phe-217 to Gly-288 shows a compositional bias: acidic residues. Positions Gln-425–Ala-569 constitute a JmjC domain. His-468, Asp-470, and His-535 together coordinate Fe cation.

The protein belongs to the ROX family. NO66 subfamily. Requires Fe(2+) as cofactor.

Its subcellular location is the nucleus. It catalyses the reaction N(6),N(6)-dimethyl-L-lysyl(36)-[histone H3] + 2 2-oxoglutarate + 2 O2 = L-lysyl(36)-[histone H3] + 2 formaldehyde + 2 succinate + 2 CO2. Its function is as follows. Oxygenase that can act as both a histone lysine demethylase and a ribosomal histidine hydroxylase. Specifically demethylates 'Lys-4' (H3K4me) and 'Lys-36' (H3K36me) of histone H3, thereby playing a central role in histone code. The polypeptide is Bifunctional lysine-specific demethylase and histidyl-hydroxylase NO66 (jmjc-1) (Caenorhabditis briggsae).